The chain runs to 250 residues: Probable transcriptional regulatory protein Cag_0165 (250 aa).

Belongs to the TACO1 family.

The protein resides in the cytoplasm. The sequence is that of Probable transcriptional regulatory protein Cag_0165 from Chlorobium chlorochromatii (strain CaD3).